The sequence spans 85 residues: Translation initiation factor IF-1 1 (85 aa).

One can recognise an S1-like domain in the interval methionine 1–leucine 72.

Belongs to the IF-1 family. As to quaternary structure, component of the 30S ribosomal translation pre-initiation complex which assembles on the 30S ribosome in the order IF-2 and IF-3, IF-1 and N-formylmethionyl-tRNA(fMet); mRNA recruitment can occur at any time during PIC assembly.

The protein localises to the cytoplasm. Its function is as follows. One of the essential components for the initiation of protein synthesis. Stabilizes the binding of IF-2 and IF-3 on the 30S subunit to which N-formylmethionyl-tRNA(fMet) subsequently binds. Helps modulate mRNA selection, yielding the 30S pre-initiation complex (PIC). Upon addition of the 50S ribosomal subunit IF-1, IF-2 and IF-3 are released leaving the mature 70S translation initiation complex. The chain is Translation initiation factor IF-1 1 from Aromatoleum aromaticum (strain DSM 19018 / LMG 30748 / EbN1) (Azoarcus sp. (strain EbN1)).